Reading from the N-terminus, the 106-residue chain is Urease subunit beta (106 aa).

The protein belongs to the urease beta subunit family. In terms of assembly, heterotrimer of UreA (gamma), UreB (beta) and UreC (alpha) subunits. Three heterotrimers associate to form the active enzyme.

The protein localises to the cytoplasm. It catalyses the reaction urea + 2 H2O + H(+) = hydrogencarbonate + 2 NH4(+). It participates in nitrogen metabolism; urea degradation; CO(2) and NH(3) from urea (urease route): step 1/1. In Synechococcus sp. (strain WH7805), this protein is Urease subunit beta.